An 89-amino-acid polypeptide reads, in one-letter code: Phosphocarrier protein HPr (89 aa).

Residues 1–88 (MLKQSIEIIN…DLINGYFGEG (88 aa)) enclose the HPr domain. The active-site Pros-phosphohistidine intermediate is the H15. S46 is subject to Phosphoserine; by HPrK/P.

Belongs to the HPr family.

The protein resides in the cytoplasm. With respect to regulation, phosphorylation on Ser-46 inhibits the phosphoryl transfer from enzyme I to HPr. In terms of biological role, general (non sugar-specific) component of the phosphoenolpyruvate-dependent sugar phosphotransferase system (sugar PTS). This major carbohydrate active-transport system catalyzes the phosphorylation of incoming sugar substrates concomitantly with their translocation across the cell membrane. The phosphoryl group from phosphoenolpyruvate (PEP) is transferred to the phosphoryl carrier protein HPr by enzyme I. Phospho-HPr then transfers it to the PTS EIIA domain. The chain is Phosphocarrier protein HPr (ptsH) from Neisseria meningitidis serogroup A / serotype 4A (strain DSM 15465 / Z2491).